Here is a 20-residue protein sequence, read N- to C-terminus: Endo-1,6-beta-glucanase (20 aa).

This sequence belongs to the glycosyl hydrolase 5 (cellulase A) family.

Its subcellular location is the secreted. It localises to the extracellular space. The catalysed reaction is Random hydrolysis of (1-&gt;6)-linkages in (1-&gt;6)-beta-D-glucans.. Its function is as follows. Endo-1,6-beta-glucanase that has highest activity against the beta-1,6-glucan pustulan. Also active against the beta-1,6-glucan lutean. Lower activity against laminarin (beta-1,3-glucan with beta-1,6-branches). Little or no activity against gentiobiose, yeast glucan, lichenin, scleroglucan, curdlan, barley glucan, CM cellulose, HE cellulose, pachyman and pullulan. The polypeptide is Endo-1,6-beta-glucanase (Acremonium sp).